Here is a 238-residue protein sequence, read N- to C-terminus: Leucine-rich repeat-containing protein 57 (238 aa).

LRR repeat units lie at residues 39-60 (NLRTIDLSSNKIEVVPPMMGKF), 62-84 (LLKSLSLNNNRISRLPDELCKLK), 85-106 (KLETLHLNGNQISQLPADFVQL), 108-129 (ALKTLNLSGNRLKTLPAQLFKL), 131-152 (NLDVVDLSKNRIQAIPDEVSGL), 153-175 (QAIELNLNQNQISQISVNISHCP), 176-196 (RLKVLRLEENCLELSMLPPSI), and 201-221 (QISLLAVEGNLFEIKKLRDLE).

The protein is Leucine-rich repeat-containing protein 57 (lrrc57) of Xenopus laevis (African clawed frog).